We begin with the raw amino-acid sequence, 558 residues long: MSLEVTRATAGMVLELYVSDREGSDATGDGTKEKPFKTGLKALMTVGKEPFPTIYVDSQKENERWNVISKSQLKNIKKMWHREQMKSESREKKEAEDSLRREKNLEEAKKITIKNDPALPEPKCVKISALEGYRGQRVKVFGWVHRLRRQGKNLMFLVLRDGTGYLQCVLADELCQCYNGVLLSTESSVAVYGMLNLTPKGKQAPGGHELSCDFWELIGLAPAGGADNLINEESDVDVQLNNRHMMIRGENMSKILKARSMITRCFRDHFFDRGYHEITPPSLVQTQVEGGATLFKLNYFGEEAFLTQSSQLYLETCLPALGDVFCIAQSYRAEQSRTRRHLAEYTHVEAECPLLTFDDLLNRLEDLVCDVVDRILKSPAGSIVYELNPNFQPPKRPFKRMNYSDAIIWLKEHDIKKEDGTFYEFGEDIPEAPERLMTDTINEPILLCRFPVEIKSFYMQRCPEDSCLTESVDVLMPNVGEIVGGSMRTSDAEEILAGYKREGIDPAPYYWYTDQRKYGTCPHGGYGLGLERFLTWILNRYHIRDVCLYPRFVQRCTP.

The residue at position 71 (S71) is a Phosphoserine. Positions 79-101 are disordered; that stretch reads MWHREQMKSESREKKEAEDSLRR. Positions 81 to 101 are enriched in basic and acidic residues; it reads HREQMKSESREKKEAEDSLRR. N6-acetyllysine is present on residues K254 and K500.

This sequence belongs to the class-II aminoacyl-tRNA synthetase family. As to quaternary structure, homodimer.

It localises to the cytoplasm. The catalysed reaction is tRNA(Asn) + L-asparagine + ATP = L-asparaginyl-tRNA(Asn) + AMP + diphosphate + H(+). In terms of biological role, catalyzes the attachment of asparagine to tRNA(Asn) in a two-step reaction: asparagine is first activated by ATP to form Asn-AMP and then transferred to the acceptor end of tRNA(Asn). In addition to its essential role in protein synthesis, acts as a signaling molecule that induced migration of CCR3-expressing cells. Has an essential role in the development of the cerebral cortex, being required for proper proliferation of radial glial cells. This chain is Asparagine--tRNA ligase, cytoplasmic, found in Macaca fascicularis (Crab-eating macaque).